A 366-amino-acid chain; its full sequence is Probable cinnamyl alcohol dehydrogenase 3 (366 aa).

C53 contributes to the Zn(2+) binding site. Position 55 (S55) interacts with NADP(+). 7 residues coordinate Zn(2+): H75, E76, C106, C109, C112, C120, and C169. NADP(+)-binding positions include T173, 194-199 (GLGGLG), 217-222 (SSSPGK), T257, G281, and 304-306 (SNI).

It belongs to the zinc-containing alcohol dehydrogenase family. As to quaternary structure, homodimer. Zn(2+) is required as a cofactor.

It carries out the reaction (E)-cinnamyl alcohol + NADP(+) = (E)-cinnamaldehyde + NADPH + H(+). The enzyme catalyses (E)-coniferol + NADP(+) = (E)-coniferaldehyde + NADPH + H(+). It catalyses the reaction (E)-sinapyl alcohol + NADP(+) = (E)-sinapaldehyde + NADPH + H(+). The catalysed reaction is (E)-4-coumaroyl alcohol + NADP(+) = (E)-4-coumaraldehyde + NADPH + H(+). It carries out the reaction (E)-caffeyl alcohol + NADP(+) = (E)-caffeyl aldehyde + NADPH + H(+). It participates in aromatic compound metabolism; phenylpropanoid biosynthesis. Its function is as follows. Involved in lignin biosynthesis. Catalyzes the final step specific for the production of lignin monomers. Catalyzes the NADPH-dependent reduction of coniferaldehyde, 5-hydroxyconiferaldehyde, sinapaldehyde, 4-coumaraldehyde and caffeyl aldehyde to their respective alcohols. The polypeptide is Probable cinnamyl alcohol dehydrogenase 3 (Oryza sativa subsp. japonica (Rice)).